The following is a 128-amino-acid chain: 3-aminoacrylate deaminase RutC (128 aa).

The protein belongs to the RutC family.

The enzyme catalyses (Z)-3-aminoacrylate + H2O + H(+) = 3-oxopropanoate + NH4(+). In terms of biological role, involved in pyrimidine catabolism. Catalyzes the deamination of 3-aminoacrylate to malonic semialdehyde, a reaction that can also occur spontaneously. RutC may facilitate the reaction and modulate the metabolic fitness, rather than catalyzing essential functions. This Serratia proteamaculans (strain 568) protein is 3-aminoacrylate deaminase RutC.